Here is a 505-residue protein sequence, read N- to C-terminus: MAYAPQLRLYNTLTRMKEEFSPLDADNVRMYVCGPTVYDFAHIGNARPVIVFDVLFRLLRHVYGAEHVTYARNITDVDDKINARAARDYPDLAFNEAIRRVTESTNAQFQADVTALGNLQPSVQPRATEHMDEMRAMIDRLVKLGVAYVAEDHVLFSPSAMNERKGPRYGALARRSLDEMLAGARVDVASYKRDEMDFVLWKPSKEGEPGWSSPAGIAVLGRPGWHIECSAMSMAKLLEPFGGGLKCDDPLKNQFDIHGGGIDLVFPHHENEIAQSCCAFGTERMANIWMHNGFLQVEGQKMSKSLGNFITIRDVLNEGLPQLGVWDDVDARDRWIGLAARLSMLQTHYREPINWTAQRLAESADELHRWYGLLRDRKFTVPETLTAVGEVVEALSDDLNSWTAITALRKAFKARDITGLGEGMALLGLLDPHFVMAEDIPVFAKAEVDHQAIEARIAERLRFINEKNWAEADRIRDELLQEGVQLKDGKDPATGERTTSWDVVG.

Cys33 is a Zn(2+) binding site. The 'HIGH' region motif lies at 35 to 45; the sequence is PTVYDFAHIGN. Residues Cys229, His268, and Glu272 each contribute to the Zn(2+) site. Positions 301-305 match the 'KMSKS' region motif; the sequence is KMSKS. Lys304 contacts ATP.

Belongs to the class-I aminoacyl-tRNA synthetase family. As to quaternary structure, monomer. Requires Zn(2+) as cofactor.

Its subcellular location is the cytoplasm. The enzyme catalyses tRNA(Cys) + L-cysteine + ATP = L-cysteinyl-tRNA(Cys) + AMP + diphosphate. The chain is Cysteine--tRNA ligase from Brucella anthropi (strain ATCC 49188 / DSM 6882 / CCUG 24695 / JCM 21032 / LMG 3331 / NBRC 15819 / NCTC 12168 / Alc 37) (Ochrobactrum anthropi).